Reading from the N-terminus, the 461-residue chain is Cysteine--tRNA ligase (461 aa).

A Zn(2+)-binding site is contributed by Cys28. The short motif at 30-40 is the 'HIGH' region element; sequence ITVYDLCHIGH. Residues Cys209, His234, and Glu238 each coordinate Zn(2+). The 'KMSKS' region signature appears at 266–270; sequence KMSKS. Lys269 contacts ATP.

The protein belongs to the class-I aminoacyl-tRNA synthetase family. As to quaternary structure, monomer. Zn(2+) is required as a cofactor.

The protein localises to the cytoplasm. It carries out the reaction tRNA(Cys) + L-cysteine + ATP = L-cysteinyl-tRNA(Cys) + AMP + diphosphate. The sequence is that of Cysteine--tRNA ligase from Escherichia coli O127:H6 (strain E2348/69 / EPEC).